The following is a 151-amino-acid chain: Superoxide dismutase [Cu-Zn] A (151 aa).

The S-palmitoyl cysteine moiety is linked to residue cysteine 6. Residues histidine 45, histidine 47, and histidine 62 each coordinate Cu cation. Cysteine 56 and cysteine 144 are oxidised to a cystine. 4 residues coordinate Zn(2+): histidine 62, histidine 70, histidine 79, and aspartate 82. Histidine 118 lines the Cu cation pocket.

Belongs to the Cu-Zn superoxide dismutase family. In terms of assembly, homodimer, and heterodimer of Superoxide dismutase [Cu-Zn] A and B. Cu cation is required as a cofactor. It depends on Zn(2+) as a cofactor.

Its subcellular location is the cytoplasm. The protein resides in the nucleus. It carries out the reaction 2 superoxide + 2 H(+) = H2O2 + O2. Its function is as follows. Destroys radicals which are normally produced within the cells and which are toxic to biological systems. The sequence is that of Superoxide dismutase [Cu-Zn] A (sod1-a) from Xenopus laevis (African clawed frog).